Consider the following 868-residue polypeptide: E3 ubiquitin-protein ligase TRIM71 (868 aa).

N-acetylalanine is present on Ala2. The segment at Cys12–Asp89 adopts an RING-type zinc-finger fold. The span at Ser26–Ser41 shows a compositional bias: low complexity. Disordered regions lie at residues Ser26–Gly50 and Ala121–Ser186. Over residues Ser142–Pro153 the composition is skewed to basic residues. Over residues Ala159–Ser176 the composition is skewed to pro residues. The span at Ala177 to Ser186 shows a compositional bias: low complexity. Residues Arg191–Gly238 form a B box-type 1; atypical zinc finger. The B box-type 2 zinc finger occupies Glu273–Leu314. Residues Cys278, His281, Cys301, and His306 each contribute to the Zn(2+) site. Positions Gln391–Ala427 form a coiled coil. The stretch at Ser479 to Val580 is one Filamin repeat. NHL repeat units lie at residues Gly593 to Cys636, His640 to Glu683, Leu687 to Asp730, Leu734 to Asp777, Ala781 to Asn824, and Leu828 to Phe868.

It belongs to the TRIM/RBCC family. Interacts (via NHL repeats) with AGO2; the interaction increases in presence of RNA. Interacts with HSP90AA1. Interacts (via NHL repeats) with MOV10, PABPC1, PUM1, PUM2, STAU2, XRN1 and XRN2 in an RNA-dependent manner. Interacts with SHCBP1; leading to enhance its stability. Post-translationally, autoubiquitinated.

It is found in the cytoplasm. It localises to the P-body. It catalyses the reaction S-ubiquitinyl-[E2 ubiquitin-conjugating enzyme]-L-cysteine + [acceptor protein]-L-lysine = [E2 ubiquitin-conjugating enzyme]-L-cysteine + N(6)-ubiquitinyl-[acceptor protein]-L-lysine.. It participates in protein modification; protein ubiquitination. In terms of biological role, E3 ubiquitin-protein ligase that cooperates with the microRNAs (miRNAs) machinery and promotes embryonic stem cells proliferation and maintenance. Binds to miRNAs and associates with AGO2, participating in post-transcriptional repression of transcripts such as CDKN1A. In addition, participates in post-transcriptional mRNA repression in a miRNA independent mechanism. Facilitates the G1-S transition to promote rapid embryonic stem cell self-renewal by repressing CDKN1A expression. Required to maintain proliferation and prevent premature differentiation of neural progenitor cells during early neural development: positively regulates FGF signaling by controlling the stability of SHCBP1. Specific regulator of miRNA biogenesis. Binds to miRNA MIR29A hairpin and postranscriptionally modulates MIR29A levels, which indirectly regulates TET proteins expression. This Bos taurus (Bovine) protein is E3 ubiquitin-protein ligase TRIM71 (TRIM71).